We begin with the raw amino-acid sequence, 413 residues long: MRALHKRVSWPPDFKLCQVRLFISEDSPSQVGSESQDHLQAKSPLASHPSDDNLPPGFGGPFSANESQIKLSDIPLIKWKCSVQILLDREWKVVAGDESKEVEAQNERELRVLEAFYPGASSIPPNPSVPADVEDSHHDDQQTIVIPILPVEDDDIAMDSASDFPTQSGVDVGTEPSITDENTSTSSTLPAGPDIMAALSAISNSKEQGSMIDQDLLIKILSNPKLVENLVANRGSAGSVSSNTSSLYSSSTHEANGVVTTAPISSNGQFYAQPPITHIPPMAYTPHAPQDQPNYGAPPARDASYYKNLIQQHGGDRQETPPVQHLGYRYNLQPGGGPNPEMVNSSNNNQRPRDSKPKIMKACMYFNSARGCRHGANCMYQHDATPYQPRNLNNGNINTSDMQNAKRMRFDRD.

Disordered regions lie at residues 28 to 61 (PSQVGSESQDHLQAKSPLASHPSDDNLPPGFGGP), 159 to 191 (DSASDFPTQSGVDVGTEPSITDENTSTSSTLPA), and 333 to 356 (QPGGGPNPEMVNSSNNNQRPRDSK). Residues 176-189 (PSITDENTSTSSTL) show a composition bias toward polar residues. The C3H1-type zinc-finger motif lies at 357 to 385 (PKIMKACMYFNSARGCRHGANCMYQHDAT). Residues 389 to 403 (PRNLNNGNINTSDMQ) are compositionally biased toward polar residues. A disordered region spans residues 389-413 (PRNLNNGNINTSDMQNAKRMRFDRD).

The polypeptide is Zinc finger CCCH domain-containing protein 6 (Arabidopsis thaliana (Mouse-ear cress)).